Consider the following 320-residue polypeptide: Ribosomal RNA small subunit methyltransferase H (320 aa).

Residues 42 to 44 (GGH), D62, F86, D108, and Q115 contribute to the S-adenosyl-L-methionine site.

This sequence belongs to the methyltransferase superfamily. RsmH family.

The protein resides in the cytoplasm. The catalysed reaction is cytidine(1402) in 16S rRNA + S-adenosyl-L-methionine = N(4)-methylcytidine(1402) in 16S rRNA + S-adenosyl-L-homocysteine + H(+). Specifically methylates the N4 position of cytidine in position 1402 (C1402) of 16S rRNA. This is Ribosomal RNA small subunit methyltransferase H from Yersinia enterocolitica serotype O:8 / biotype 1B (strain NCTC 13174 / 8081).